Reading from the N-terminus, the 342-residue chain is uncharacterized protein (342 aa).

Arg69 contributes to the substrate binding site. The Proton donor role is filled by His176. Asp240 provides a ligand contact to substrate.

The protein belongs to the aldose epimerase family.

This is an uncharacterized protein from Saccharomyces cerevisiae (strain ATCC 204508 / S288c) (Baker's yeast).